The primary structure comprises 45 residues: Large ribosomal subunit protein bL34 (45 aa).

Belongs to the bacterial ribosomal protein bL34 family.

The protein is Large ribosomal subunit protein bL34 (rpmH) of Streptomyces coelicolor (strain ATCC BAA-471 / A3(2) / M145).